The sequence spans 586 residues: Phosphomethylpyrimidine synthase (586 aa).

Disordered stretches follow at residues 38 to 59 (IELS…TSGP) and 92 to 114 (GREI…VFPQ). Residues 92–102 (GREIKPEDDGV) show a composition bias toward basic and acidic residues. Substrate contacts are provided by residues Asn-193, Met-222, Tyr-251, His-287, 307-309 (SRG), 348-351 (DGLR), and Glu-387. His-391 serves as a coordination point for Zn(2+). Tyr-414 contributes to the substrate binding site. His-455 is a binding site for Zn(2+). [4Fe-4S] cluster is bound by residues Cys-535, Cys-538, and Cys-543.

It belongs to the ThiC family. The cofactor is [4Fe-4S] cluster.

The catalysed reaction is 5-amino-1-(5-phospho-beta-D-ribosyl)imidazole + S-adenosyl-L-methionine = 4-amino-2-methyl-5-(phosphooxymethyl)pyrimidine + CO + 5'-deoxyadenosine + formate + L-methionine + 3 H(+). The protein operates within cofactor biosynthesis; thiamine diphosphate biosynthesis. In terms of biological role, catalyzes the synthesis of the hydroxymethylpyrimidine phosphate (HMP-P) moiety of thiamine from aminoimidazole ribotide (AIR) in a radical S-adenosyl-L-methionine (SAM)-dependent reaction. The polypeptide is Phosphomethylpyrimidine synthase (Bacillus cytotoxicus (strain DSM 22905 / CIP 110041 / 391-98 / NVH 391-98)).